The primary structure comprises 340 residues: S-adenosylmethionine:tRNA ribosyltransferase-isomerase (340 aa).

Belongs to the QueA family. In terms of assembly, monomer.

It localises to the cytoplasm. It catalyses the reaction 7-aminomethyl-7-carbaguanosine(34) in tRNA + S-adenosyl-L-methionine = epoxyqueuosine(34) in tRNA + adenine + L-methionine + 2 H(+). The protein operates within tRNA modification; tRNA-queuosine biosynthesis. Transfers and isomerizes the ribose moiety from AdoMet to the 7-aminomethyl group of 7-deazaguanine (preQ1-tRNA) to give epoxyqueuosine (oQ-tRNA). The protein is S-adenosylmethionine:tRNA ribosyltransferase-isomerase of Chlorobaculum parvum (strain DSM 263 / NCIMB 8327) (Chlorobium vibrioforme subsp. thiosulfatophilum).